Reading from the N-terminus, the 276-residue chain is MITTTSQEIELAPTRLPGSQNAARLFVAQTLLQTNRLLTRWARDYITVIGAIVLPILFMVVLNIVLGNLAYVVTHDSGLYSIVPLIALGAAITGSTFVAIDLMRERSFGLLARLWVLPVHRASGLISRILANAIRTLVTTLVMLGTGVVLGFRFRQGLIPSLMWISVPVILGIAIAAMVTTVALYTAQTVVVEGVELVQAIAIFFSTGLVPLNSYPGWIQPFVAHQPVSYAIAAMRGFAMGGPVLSPMIGMLVWTAGICVVCAVPLAIGYRRASTH.

6 helical membrane-spanning segments follow: residues 46 to 66, 82 to 102, 129 to 149, 159 to 179, 190 to 210, and 248 to 268; these read ITVI…NIVL, IVPL…AIDL, ILAN…TGVV, IPSL…AAMV, VVVE…TGLV, and MIGM…PLAI. An ABC transmembrane type-2 domain is found at 46–273; it reads ITVIGAIVLP…VPLAIGYRRA (228 aa).

The protein belongs to the ABC-2 integral membrane protein family. In terms of assembly, the complex is composed of two ATP-binding proteins (DrrA) and two transmembrane proteins (DrrB and DrrC).

It localises to the cell membrane. Probably part of the ABC transporter complex DrrABC involved in doxorubicin resistance. Probably responsible for the translocation of the substrate across the membrane. This chain is Probable doxorubicin resistance ABC transporter permease protein DrrC (drrC), found in Mycobacterium tuberculosis (strain CDC 1551 / Oshkosh).